A 115-amino-acid polypeptide reads, in one-letter code: NAD(P)H-quinone oxidoreductase subunit M, organellar chromatophore (115 aa).

Belongs to the complex I NdhM subunit family. NDH-1 can be composed of about 15 different subunits; different subcomplexes with different compositions have been identified which probably have different functions.

The protein localises to the plastid. It is found in the organellar chromatophore thylakoid membrane. The enzyme catalyses a plastoquinone + NADH + (n+1) H(+)(in) = a plastoquinol + NAD(+) + n H(+)(out). It carries out the reaction a plastoquinone + NADPH + (n+1) H(+)(in) = a plastoquinol + NADP(+) + n H(+)(out). Functionally, NDH-1 shuttles electrons from an unknown electron donor, via FMN and iron-sulfur (Fe-S) centers, to quinones in the respiratory and/or the photosynthetic chain. The immediate electron acceptor for the enzyme in this species is believed to be plastoquinone. Couples the redox reaction to proton translocation, and thus conserves the redox energy in a proton gradient. The sequence is that of NAD(P)H-quinone oxidoreductase subunit M, organellar chromatophore from Paulinella chromatophora.